The following is a 151-amino-acid chain: Cytochrome c-type biogenesis protein CcmE 1 (151 aa).

Residues 1-8 (MNPLRKKR) are Cytoplasmic-facing. Residues 9–29 (LIIILAILVGVGAAVGLALSA) form a helical; Signal-anchor for type II membrane protein membrane-spanning segment. Over 30-151 (LQQNINLFYT…QSAPTPAKEG (122 aa)) the chain is Periplasmic. Heme-binding residues include His124 and Tyr128. A disordered region spans residues 131–151 (PEVTKALKDSGQSAPTPAKEG).

It belongs to the CcmE/CycJ family.

Its subcellular location is the cell inner membrane. Functionally, heme chaperone required for the biogenesis of c-type cytochromes. Transiently binds heme delivered by CcmC and transfers the heme to apo-cytochromes in a process facilitated by CcmF and CcmH. The protein is Cytochrome c-type biogenesis protein CcmE 1 of Pseudomonas fluorescens (strain Pf0-1).